The sequence spans 859 residues: DNA mismatch repair protein MutS (859 aa).

Residue Gly622 to Ser629 coordinates ATP.

Belongs to the DNA mismatch repair MutS family.

Its function is as follows. This protein is involved in the repair of mismatches in DNA. It is possible that it carries out the mismatch recognition step. This protein has a weak ATPase activity. This is DNA mismatch repair protein MutS from Syntrophomonas wolfei subsp. wolfei (strain DSM 2245B / Goettingen).